The chain runs to 80 residues: MSSDSNFDPWIPVCVVVVMTSVVLFAGLHVYLWYVRRQLVAFCLEKVCVRCCGKDETTPLVEDAEPPAELEMVEVSDECY.

The chain crosses the membrane as a helical span at residues 10 to 30 (WIPVCVVVVMTSVVLFAGLHV).

It is found in the host membrane. In terms of biological role, plays a role in the down-regulation of the host NKG2D ligand MICA by utilizing the lysosomal pathway for its degradation. In turn, MICA reduction diminishes NK-cell killing of HCMV-infected cells. In Human cytomegalovirus (strain Merlin) (HHV-5), this protein is Protein UL148A (UL148A).